The sequence spans 29 residues: Dermaseptin-9TR (29 aa).

Expressed by the skin glands.

Its subcellular location is the secreted. Functionally, has antimicrobial activity. This chain is Dermaseptin-9TR, found in Phyllomedusa trinitatis (Trinidad leaf frog).